We begin with the raw amino-acid sequence, 236 residues long: Probable methylthioribulose-1-phosphate dehydratase (236 aa).

Residues 1–29 are disordered; it reads MQNVQQPKKRKLSDEIIAEDEDYQRDPEH. Cysteine 103 contributes to the substrate binding site. Zn(2+) is bound by residues histidine 121, histidine 123, and histidine 201.

Belongs to the aldolase class II family. MtnB subfamily. Zn(2+) is required as a cofactor.

It localises to the cytoplasm. It catalyses the reaction 5-(methylsulfanyl)-D-ribulose 1-phosphate = 5-methylsulfanyl-2,3-dioxopentyl phosphate + H2O. It functions in the pathway amino-acid biosynthesis; L-methionine biosynthesis via salvage pathway; L-methionine from S-methyl-5-thio-alpha-D-ribose 1-phosphate: step 2/6. In terms of biological role, catalyzes the dehydration of methylthioribulose-1-phosphate (MTRu-1-P) into 2,3-diketo-5-methylthiopentyl-1-phosphate (DK-MTP-1-P). The sequence is that of Probable methylthioribulose-1-phosphate dehydratase from Trichoplax adhaerens (Trichoplax reptans).